Consider the following 947-residue polypeptide: DNA mismatch repair protein MutS (947 aa).

Residue 620-627 coordinates ATP; it reads GPNMSGKS.

It belongs to the DNA mismatch repair MutS family.

In terms of biological role, this protein is involved in the repair of mismatches in DNA. It is possible that it carries out the mismatch recognition step. This protein has a weak ATPase activity. The sequence is that of DNA mismatch repair protein MutS from Clostridioides difficile (strain 630) (Peptoclostridium difficile).